The following is a 296-amino-acid chain: Thymidylate synthase (296 aa).

DUMP-binding positions include arginine 24 and 151–152 (RR). Residue cysteine 171 is the Nucleophile of the active site. DUMP contacts are provided by residues 197–200 (RSAD), asparagine 208, and 238–240 (HVY). (6R)-5,10-methylene-5,6,7,8-tetrahydrofolate is bound at residue aspartate 200.

The protein belongs to the thymidylate synthase family. Homodimer.

The enzyme catalyses dUMP + (6R)-5,10-methylene-5,6,7,8-tetrahydrofolate = 7,8-dihydrofolate + dTMP. Its pathway is pyrimidine metabolism; dTTP biosynthesis. This chain is Thymidylate synthase (tms1), found in Agaricus bisporus (White button mushroom).